We begin with the raw amino-acid sequence, 226 residues long: MNSQGSAQKAGTLLLLLISNLLFCQNVQPLPICSAGDCQTSLRELFDRVVILSHYIHTLYTDMFIEFDKQYVQDREFMVKVINDCPTSSLATPEDKEQALKVPPEVLLNLILSLVQSSSDPLFQLITGVGGIQEAPEYILSRAKEIEEQNKQLLEGVEKIISQAYPEAKGNGIYFVWSQLPSLQGVDEESKILSLRNTIRCLRRDSHKVDNFLKVLRCQIAHQNNC.

The N-terminal stretch at 1–29 (MNSQGSAQKAGTLLLLLISNLLFCQNVQP) is a signal peptide. Cys-33 and Cys-38 are oxidised to a cystine. 2 positions are modified to phosphoserine: Ser-53 and Ser-117. 2 disulfide bridges follow: Cys-85-Cys-201 and Cys-218-Cys-226.

The protein belongs to the somatotropin/prolactin family. As to quaternary structure, interacts with PRLR.

It is found in the secreted. Prolactin acts primarily on the mammary gland by promoting lactation. The protein is Prolactin (Prl) of Mus musculus (Mouse).